An 870-amino-acid polypeptide reads, in one-letter code: Glycerol-3-phosphate acyltransferase (870 aa).

Positions 1-27 (MPKKNSPLLPKETTPTQSSVDTSGSSN) are disordered. Polar residues predominate over residues 13–27 (TTPTQSSVDTSGSSN). The short motif at 351 to 356 (HRSHID) is the HXXXXD motif element.

The protein belongs to the GPAT/DAPAT family.

Its subcellular location is the cell inner membrane. The enzyme catalyses sn-glycerol 3-phosphate + an acyl-CoA = a 1-acyl-sn-glycero-3-phosphate + CoA. It participates in phospholipid metabolism; CDP-diacylglycerol biosynthesis; CDP-diacylglycerol from sn-glycerol 3-phosphate: step 1/3. In Xylella fastidiosa (strain 9a5c), this protein is Glycerol-3-phosphate acyltransferase (plsB).